Reading from the N-terminus, the 216-residue chain is MRRAFVERNTNETKISVAIALDKAPLPEESNFIDELITSKHANQKGEQVIQVDTGIGFLDHMYHALAKHAGWSLRLYSRGDLIIDDHHTAEDTAIALGIAFKQAMGNFAGVKRFGHAYCPLDEALSRSVVDLSGRPYAVIDLGLKREKVGELSCEMIPHLLYSFSVAAGITLHVTCLYGSNDHHRAESAFKSLAVAMRAATSLTGSSEVPSTKGVL.

Ser-211 is subject to Phosphoserine.

It belongs to the imidazoleglycerol-phosphate dehydratase family.

It catalyses the reaction D-erythro-1-(imidazol-4-yl)glycerol 3-phosphate = 3-(imidazol-4-yl)-2-oxopropyl phosphate + H2O. It functions in the pathway amino-acid biosynthesis; L-histidine biosynthesis; L-histidine from 5-phospho-alpha-D-ribose 1-diphosphate: step 6/9. This is Imidazoleglycerol-phosphate dehydratase (his5) from Schizosaccharomyces pombe (strain 972 / ATCC 24843) (Fission yeast).